Reading from the N-terminus, the 546-residue chain is Carboxypeptidase Y homolog A (546 aa).

An N-terminal signal peptide occupies residues 1–17 (MKLLASTVLMGAAAASI). Residues 18 to 132 (APQQQVLKNP…KLEKYNMRAK (115 aa)) constitute a propeptide that is removed on maturation. Disulfide bonds link Cys186/Cys426, Cys320/Cys334, Cys344/Cys367, Cys351/Cys360, and Cys389/Cys396. A glycan (N-linked (GlcNAc...) asparagine) is linked at Asn217. Ser273 is an active-site residue. The active site involves Asp465. Asn512 carries N-linked (GlcNAc...) asparagine glycosylation. His523 is an active-site residue.

This sequence belongs to the peptidase S10 family.

The protein localises to the vacuole. It catalyses the reaction Release of a C-terminal amino acid with broad specificity.. Vacuolar carboxypeptidase involved in degradation of small peptides. Digests preferentially peptides containing an aliphatic or hydrophobic residue in P1' position, as well as methionine, leucine or phenylalanine in P1 position of ester substrate. This is Carboxypeptidase Y homolog A (cpyA) from Sclerotinia sclerotiorum (strain ATCC 18683 / 1980 / Ss-1) (White mold).